The following is a 393-amino-acid chain: NAD(P)H-quinone oxidoreductase subunit H, chloroplastic (393 aa).

Belongs to the complex I 49 kDa subunit family. NDH is composed of at least 16 different subunits, 5 of which are encoded in the nucleus.

The protein resides in the plastid. It is found in the chloroplast thylakoid membrane. The catalysed reaction is a plastoquinone + NADH + (n+1) H(+)(in) = a plastoquinol + NAD(+) + n H(+)(out). The enzyme catalyses a plastoquinone + NADPH + (n+1) H(+)(in) = a plastoquinol + NADP(+) + n H(+)(out). NDH shuttles electrons from NAD(P)H:plastoquinone, via FMN and iron-sulfur (Fe-S) centers, to quinones in the photosynthetic chain and possibly in a chloroplast respiratory chain. The immediate electron acceptor for the enzyme in this species is believed to be plastoquinone. Couples the redox reaction to proton translocation, and thus conserves the redox energy in a proton gradient. In Lolium perenne (Perennial ryegrass), this protein is NAD(P)H-quinone oxidoreductase subunit H, chloroplastic.